The primary structure comprises 396 residues: Elongation factor Tu (396 aa).

The tr-type G domain maps to 10–206; sequence KPHVNVGTIG…ALDTYIPTPE (197 aa). A G1 region spans residues 19–26; the sequence is GHVDHGKT. 19–26 serves as a coordination point for GTP; that stretch reads GHVDHGKT. Threonine 26 is a Mg(2+) binding site. Positions 60 to 64 are G2; that stretch reads GITIN. The segment at 81–84 is G3; that stretch reads DCPG. Residues 81 to 85 and 136 to 139 contribute to the GTP site; these read DCPGH and NKCD. Residues 136 to 139 form a G4 region; it reads NKCD. Positions 174–176 are G5; that stretch reads SAK.

It belongs to the TRAFAC class translation factor GTPase superfamily. Classic translation factor GTPase family. EF-Tu/EF-1A subfamily. As to quaternary structure, monomer.

It is found in the cytoplasm. The enzyme catalyses GTP + H2O = GDP + phosphate + H(+). Functionally, GTP hydrolase that promotes the GTP-dependent binding of aminoacyl-tRNA to the A-site of ribosomes during protein biosynthesis. This Burkholderia cepacia (Pseudomonas cepacia) protein is Elongation factor Tu.